Reading from the N-terminus, the 407-residue chain is Nicotinate phosphoribosyltransferase (407 aa).

At H224 the chain carries Phosphohistidine; by autocatalysis.

Belongs to the NAPRTase family. Transiently phosphorylated on a His residue during the reaction cycle. Phosphorylation strongly increases the affinity for substrates and increases the rate of nicotinate D-ribonucleotide production. Dephosphorylation regenerates the low-affinity form of the enzyme, leading to product release.

It carries out the reaction nicotinate + 5-phospho-alpha-D-ribose 1-diphosphate + ATP + H2O = nicotinate beta-D-ribonucleotide + ADP + phosphate + diphosphate. Its pathway is cofactor biosynthesis; NAD(+) biosynthesis; nicotinate D-ribonucleotide from nicotinate: step 1/1. Functionally, catalyzes the synthesis of beta-nicotinate D-ribonucleotide from nicotinate and 5-phospho-D-ribose 1-phosphate at the expense of ATP. The chain is Nicotinate phosphoribosyltransferase from Pseudomonas savastanoi pv. phaseolicola (strain 1448A / Race 6) (Pseudomonas syringae pv. phaseolicola (strain 1448A / Race 6)).